Here is a 284-residue protein sequence, read N- to C-terminus: Large ribosomal subunit protein uL2 (284 aa).

Disordered stretches follow at residues 28–50 (ELEGSSSKRSVRPNKKLSFFKKS) and 232–284 (RGTA…DRRK). The span at 36–46 (RSVRPNKKLSF) shows a compositional bias: basic residues. Over residues 240–250 (DHPHGGGEGRH) the composition is skewed to basic and acidic residues. Positions 264–284 (KGLKTRDKRKSNKWIVKDRRK) are enriched in basic residues.

The protein belongs to the universal ribosomal protein uL2 family. As to quaternary structure, part of the 50S ribosomal subunit. Forms a bridge to the 30S subunit in the 70S ribosome.

Functionally, one of the primary rRNA binding proteins. Required for association of the 30S and 50S subunits to form the 70S ribosome, for tRNA binding and peptide bond formation. It has been suggested to have peptidyltransferase activity; this is somewhat controversial. Makes several contacts with the 16S rRNA in the 70S ribosome. In Chlamydia muridarum (strain MoPn / Nigg), this protein is Large ribosomal subunit protein uL2.